The sequence spans 68 residues: ATP synthase subunit K, mitochondrial (68 aa).

The chain crosses the membrane as a helical span at residues 15–31 (HQLAIGTLGLLGLLVVP).

It belongs to the ATP19 family. As to quaternary structure, F-type ATPases have 2 components, CF(1) - the catalytic core - and CF(0) - the membrane proton channel. In yeast, the dimeric form of ATP synthase consists of 17 polypeptides: alpha, beta, gamma, delta, epsilon, 4 (B), 5 (OSCP), 6 (A), 8, 9 (C), d, E (Tim11), f, g, h, i/j and k.

The protein localises to the mitochondrion inner membrane. In terms of biological role, mitochondrial membrane ATP synthase (F(1)F(0) ATP synthase or Complex V) produces ATP from ADP in the presence of a proton gradient across the membrane which is generated by electron transport complexes of the respiratory chain. F-type ATPases consist of two structural domains, F(1) - containing the extramembraneous catalytic core and F(0) - containing the membrane proton channel, linked together by a central stalk and a peripheral stalk. During catalysis, ATP synthesis in the catalytic domain of F(1) is coupled via a rotary mechanism of the central stalk subunits to proton translocation. Part of the complex F(0) domain. Minor subunit located with subunit a in the membrane. The K chain binds the dimeric form by interacting with the G and E chains. The sequence is that of ATP synthase subunit K, mitochondrial (ATP19) from Saccharomyces cerevisiae (strain ATCC 204508 / S288c) (Baker's yeast).